The chain runs to 102 residues: Large ribosomal subunit protein bL21 (102 aa).

Belongs to the bacterial ribosomal protein bL21 family. Part of the 50S ribosomal subunit. Contacts protein L20.

Its function is as follows. This protein binds to 23S rRNA in the presence of protein L20. The protein is Large ribosomal subunit protein bL21 of Trichlorobacter lovleyi (strain ATCC BAA-1151 / DSM 17278 / SZ) (Geobacter lovleyi).